Here is a 388-residue protein sequence, read N- to C-terminus: Angiopoietin-related protein 5 (388 aa).

A signal peptide spans 1–25; it reads MMSPSQASLLFLNVCIFICGEAVQG. Asn53 carries N-linked (GlcNAc...) asparagine glycosylation. Positions 98 to 123 form a coiled coil; the sequence is LRNMMDEQQASLDYLSNQVNELMNRV. The region spanning 141–383 is the Fibrinogen C-terminal domain; sequence RPVQSHGLDC…SVSMKIRRMY (243 aa). Asn238 carries N-linked (GlcNAc...) asparagine glycosylation. 2 cysteine pairs are disulfide-bonded: Cys310/Cys314 and Cys324/Cys338. An N-linked (GlcNAc...) asparagine glycan is attached at Asn329.

Mainly expressed in adult heart.

The protein localises to the secreted. The protein is Angiopoietin-related protein 5 (ANGPTL5) of Homo sapiens (Human).